The following is a 244-amino-acid chain: Large ribosomal subunit protein uL2 (244 aa).

2 stretches are compositionally biased toward basic residues: residues 1–12 (MGKRPLVRRRGR) and 234–244 (KTGRARIKERK). 2 disordered regions span residues 1 to 30 (MGKR…TKAN) and 203 to 244 (HGGG…KERK).

The protein belongs to the universal ribosomal protein uL2 family. Part of the 50S ribosomal subunit. Forms a bridge to the 30S subunit in the 70S ribosome.

Functionally, one of the primary rRNA binding proteins. Required for association of the 30S and 50S subunits to form the 70S ribosome, for tRNA binding and peptide bond formation. It has been suggested to have peptidyltransferase activity; this is somewhat controversial. Makes several contacts with the 16S rRNA in the 70S ribosome. In Nitrosopumilus maritimus (strain SCM1), this protein is Large ribosomal subunit protein uL2.